Reading from the N-terminus, the 198-residue chain is Outer-membrane lipoprotein carrier protein (198 aa).

Positions 1–17 are cleaved as a signal peptide; it reads MKKFLFSLCLLSSTVLA.

The protein belongs to the LolA family. As to quaternary structure, monomer.

It is found in the periplasm. Its function is as follows. Participates in the translocation of lipoproteins from the inner membrane to the outer membrane. Only forms a complex with a lipoprotein if the residue after the N-terminal Cys is not an aspartate (The Asp acts as a targeting signal to indicate that the lipoprotein should stay in the inner membrane). This Aliivibrio fischeri (strain MJ11) (Vibrio fischeri) protein is Outer-membrane lipoprotein carrier protein.